The chain runs to 513 residues: Nitrogenase molybdenum-iron protein beta chain (513 aa).

The [8Fe-7S] cluster site is built by cysteine 70, cysteine 95, and cysteine 153.

The protein belongs to the NifD/NifK/NifE/NifN family. Tetramer of two alpha and two beta chains. Forms complex with the iron protein (nitrogenase component 2). [8Fe-7S] cluster serves as cofactor.

The catalysed reaction is N2 + 8 reduced [2Fe-2S]-[ferredoxin] + 16 ATP + 16 H2O = H2 + 8 oxidized [2Fe-2S]-[ferredoxin] + 2 NH4(+) + 16 ADP + 16 phosphate + 6 H(+). Functionally, this molybdenum-iron protein is part of the nitrogenase complex that catalyzes the key enzymatic reactions in nitrogen fixation. This chain is Nitrogenase molybdenum-iron protein beta chain (nifK1), found in Sinorhizobium fredii (strain NBRC 101917 / NGR234).